A 530-amino-acid chain; its full sequence is Glucose-6-phosphate isomerase (530 aa).

Glu-356 acts as the Proton donor in catalysis. Catalysis depends on residues His-387 and Lys-502.

Belongs to the GPI family.

It is found in the cytoplasm. It carries out the reaction alpha-D-glucose 6-phosphate = beta-D-fructose 6-phosphate. The protein operates within carbohydrate biosynthesis; gluconeogenesis. It participates in carbohydrate degradation; glycolysis; D-glyceraldehyde 3-phosphate and glycerone phosphate from D-glucose: step 2/4. In terms of biological role, catalyzes the reversible isomerization of glucose-6-phosphate to fructose-6-phosphate. This chain is Glucose-6-phosphate isomerase, found in Borreliella burgdorferi (strain ATCC 35210 / DSM 4680 / CIP 102532 / B31) (Borrelia burgdorferi).